A 110-amino-acid polypeptide reads, in one-letter code: Large ribosomal subunit protein uL22 (110 aa).

This sequence belongs to the universal ribosomal protein uL22 family. In terms of assembly, part of the 50S ribosomal subunit.

In terms of biological role, this protein binds specifically to 23S rRNA; its binding is stimulated by other ribosomal proteins, e.g. L4, L17, and L20. It is important during the early stages of 50S assembly. It makes multiple contacts with different domains of the 23S rRNA in the assembled 50S subunit and ribosome. Functionally, the globular domain of the protein is located near the polypeptide exit tunnel on the outside of the subunit, while an extended beta-hairpin is found that lines the wall of the exit tunnel in the center of the 70S ribosome. The polypeptide is Large ribosomal subunit protein uL22 (Aliivibrio fischeri (strain MJ11) (Vibrio fischeri)).